We begin with the raw amino-acid sequence, 564 residues long: Ribulokinase (564 aa).

The protein belongs to the ribulokinase family.

The enzyme catalyses D-ribulose + ATP = D-ribulose 5-phosphate + ADP + H(+). It carries out the reaction L-ribulose + ATP = L-ribulose 5-phosphate + ADP + H(+). It participates in carbohydrate degradation; L-arabinose degradation via L-ribulose; D-xylulose 5-phosphate from L-arabinose (bacterial route): step 2/3. The protein is Ribulokinase of Anoxybacillus flavithermus (strain DSM 21510 / WK1).